The chain runs to 341 residues: tRNA N6-adenosine threonylcarbamoyltransferase (341 aa).

Histidine 115 and histidine 119 together coordinate Fe cation. Residues isoleucine 137–glycine 141, aspartate 170, glycine 183, aspartate 187, and asparagine 276 contribute to the substrate site. Aspartate 304 contacts Fe cation.

Belongs to the KAE1 / TsaD family. The cofactor is Fe(2+).

It localises to the cytoplasm. The catalysed reaction is L-threonylcarbamoyladenylate + adenosine(37) in tRNA = N(6)-L-threonylcarbamoyladenosine(37) in tRNA + AMP + H(+). Required for the formation of a threonylcarbamoyl group on adenosine at position 37 (t(6)A37) in tRNAs that read codons beginning with adenine. Is involved in the transfer of the threonylcarbamoyl moiety of threonylcarbamoyl-AMP (TC-AMP) to the N6 group of A37, together with TsaE and TsaB. TsaD likely plays a direct catalytic role in this reaction. This chain is tRNA N6-adenosine threonylcarbamoyltransferase, found in Staphylococcus aureus (strain bovine RF122 / ET3-1).